The chain runs to 350 residues: tRNA uridine(34) hydroxylase (350 aa).

The 95-residue stretch at 146–240 (DDPDAVFIDM…YARRARAQGL (95 aa)) folds into the Rhodanese domain. Cysteine 200 (cysteine persulfide intermediate) is an active-site residue. Residues 319–328 (RRRRAGRENG) show a composition bias toward basic and acidic residues. The segment at 319–350 (RRRRAGRENGNKIFNKSRGRLNSKLSIPDPAE) is disordered.

The protein belongs to the TrhO family.

It catalyses the reaction uridine(34) in tRNA + AH2 + O2 = 5-hydroxyuridine(34) in tRNA + A + H2O. Its function is as follows. Catalyzes oxygen-dependent 5-hydroxyuridine (ho5U) modification at position 34 in tRNAs. In Salmonella newport (strain SL254), this protein is tRNA uridine(34) hydroxylase.